The primary structure comprises 235 residues: BPI fold-containing family A member 2 (235 aa).

The first 20 residues, 1 to 20 (MFQLGSLVVLCGLLIGTSES), serve as a signal peptide directing secretion. Cys-161 and Cys-204 are oxidised to a cystine.

Belongs to the BPI/LBP/Plunc superfamily. Plunc family. As to expression, expressed in parotid, submandibular and sublingual glands.

It is found in the secreted. Has strong antibacterial activity against P.aeruginosa. This chain is BPI fold-containing family A member 2 (Bpifa2), found in Rattus norvegicus (Rat).